A 103-amino-acid polypeptide reads, in one-letter code: Large ribosomal subunit protein bL21 (103 aa).

It belongs to the bacterial ribosomal protein bL21 family. As to quaternary structure, part of the 50S ribosomal subunit. Contacts protein L20.

This protein binds to 23S rRNA in the presence of protein L20. This Burkholderia ambifaria (strain MC40-6) protein is Large ribosomal subunit protein bL21.